The sequence spans 253 residues: uncharacterized protein (253 aa).

A BPL/LPL catalytic domain is found at 30-236 (AQGRQVAQLW…AVDDDAALMA (207 aa)).

This is an uncharacterized protein from Cupriavidus necator (strain ATCC 17699 / DSM 428 / KCTC 22496 / NCIMB 10442 / H16 / Stanier 337) (Ralstonia eutropha).